The following is a 309-amino-acid chain: Ribosomal RNA small subunit methyltransferase H (309 aa).

S-adenosyl-L-methionine contacts are provided by residues 33–35 (GGH), aspartate 53, phenylalanine 79, aspartate 100, and glutamine 107.

This sequence belongs to the methyltransferase superfamily. RsmH family.

The protein resides in the cytoplasm. It carries out the reaction cytidine(1402) in 16S rRNA + S-adenosyl-L-methionine = N(4)-methylcytidine(1402) in 16S rRNA + S-adenosyl-L-homocysteine + H(+). In terms of biological role, specifically methylates the N4 position of cytidine in position 1402 (C1402) of 16S rRNA. This is Ribosomal RNA small subunit methyltransferase H from Clostridium botulinum (strain ATCC 19397 / Type A).